A 109-amino-acid polypeptide reads, in one-letter code: Probable sulredoxin (109 aa).

Residues 3–107 (WKRTISAKAL…IRDNGGWIEV (105 aa)) enclose the Rieske domain. [2Fe-2S] cluster is bound by residues cysteine 43, histidine 45, cysteine 62, and histidine 65.

It belongs to the SDX family. [2Fe-2S] cluster is required as a cofactor.

It localises to the cytoplasm. The polypeptide is Probable sulredoxin (sdx) (Saccharolobus solfataricus (strain ATCC 35092 / DSM 1617 / JCM 11322 / P2) (Sulfolobus solfataricus)).